The following is a 397-amino-acid chain: Glycine betaine/carnitine transport ATP-binding protein GbuA (397 aa).

Residues 28–264 (KSKTDILKET…PANEYVEKFI (237 aa)) enclose the ABC transporter domain. Residue 60 to 67 (GLSGSGKS) participates in ATP binding. 2 CBS domains span residues 279–335 (MIRP…NITS) and 340–395 (LHRD…EVNV).

Belongs to the ABC transporter superfamily. In terms of assembly, the complex is composed of two ATP-binding proteins (GbuA), two transmembrane proteins (GbuB) and a solute-binding protein (GbuC).

The catalysed reaction is a quaternary ammonium(out) + ATP + H2O = a quaternary ammonium(in) + ADP + phosphate + H(+). With respect to regulation, the complex is activated by an osmotic gradient or by low temperature. In terms of biological role, part of the ABC transporter complex GbuABC involved in glycine betaine uptake. Responsible for energy coupling to the transport system. Involved, with BetL and OpuC, in osmoprotection and cryoprotection of Listeria. Can also uptake carnitine when carnitine is abundant in the growth medium. This Listeria monocytogenes serotype 1/2a (strain 10403S) protein is Glycine betaine/carnitine transport ATP-binding protein GbuA (gbuA).